Consider the following 1112-residue polypeptide: Phytochrome E (1112 aa).

The disordered stretch occupies residues 1–20; sequence MGFESSSSAASNMKPQPQKS. Positions 217 to 387 constitute a GAF domain; sequence DIGALCDTVV…AFGLQLQMEL (171 aa). C322 contacts phytochromobilin. PAS domains are found at residues 595–666 and 732–803; these read FVCE…LQGE and DYKT…LISL. In terms of domain architecture, Histidine kinase spans 877 to 1096; it reads YVRQEIKNPL…FFQVDLQVKT (220 aa).

Belongs to the phytochrome family. In terms of assembly, homodimer. In terms of processing, contains one covalently linked phytochromobilin chromophore.

Functionally, regulatory photoreceptor which exists in two forms that are reversibly interconvertible by light: the Pr form that absorbs maximally in the red region of the spectrum and the Pfr form that absorbs maximally in the far-red region. Photoconversion of Pr to Pfr induces an array of morphogenic responses, whereas reconversion of Pfr to Pr cancels the induction of those responses. Pfr controls the expression of a number of nuclear genes including those encoding the small subunit of ribulose-bisphosphate carboxylase, chlorophyll A/B binding protein, protochlorophyllide reductase, rRNA, etc. It also controls the expression of its own gene(s) in a negative feedback fashion. This is Phytochrome E (PHYE) from Arabidopsis thaliana (Mouse-ear cress).